Consider the following 436-residue polypeptide: O-phosphoseryl-tRNA(Sec) selenium transferase (436 aa).

The tract at residues 1–44 is tetramerization; sequence MLDFNIEGLIPKNMEKRGELVLNEYLKEIEDVFNHRKIPENGID. Arginine 72 is a pyridoxal 5'-phosphate binding site. Positions 93 to 103 are phosphate loop (P-loop); that stretch reads GRSGNLVDPQP. The substrate site is built by arginine 94, serine 95, and glutamine 102. N6-(pyridoxal phosphate)lysine is present on lysine 278. Residue arginine 307 coordinates substrate.

It belongs to the SepSecS family. In terms of assembly, homotetramer. It depends on pyridoxal 5'-phosphate as a cofactor.

It catalyses the reaction O-phospho-L-seryl-tRNA(Sec) + selenophosphate + H2O = L-selenocysteinyl-tRNA(Sec) + 2 phosphate. Its pathway is aminoacyl-tRNA biosynthesis; selenocysteinyl-tRNA(Sec) biosynthesis; selenocysteinyl-tRNA(Sec) from L-seryl-tRNA(Sec) (archaeal/eukaryal route): step 2/2. In terms of biological role, converts O-phosphoseryl-tRNA(Sec) to selenocysteinyl-tRNA(Sec) required for selenoprotein biosynthesis. The sequence is that of O-phosphoseryl-tRNA(Sec) selenium transferase (spcS) from Methanococcus maripaludis (strain DSM 14266 / JCM 13030 / NBRC 101832 / S2 / LL).